The primary structure comprises 375 residues: CC-adding tRNA nucleotidyltransferase (375 aa).

CTP is bound at residue 27-30 (GAVR). The Mg(2+) site is built by Asp-40 and Asp-42. Residues 95–96 (RD), Asn-100, 137–146 (DPLRMLRAPR), and Arg-177 contribute to the CTP site.

Belongs to the tRNA nucleotidyltransferase/poly(A) polymerase family. The cofactor is Mg(2+).

It carries out the reaction a tRNA precursor + 2 CTP = a tRNA with a 3' CC end + 2 diphosphate. Functionally, tRNA nucleotidyltransferase involved in the synthesis of the tRNA CCA terminus. Adds the two cytidine residues to tRNA. In Halalkalibacterium halodurans (strain ATCC BAA-125 / DSM 18197 / FERM 7344 / JCM 9153 / C-125) (Bacillus halodurans), this protein is CC-adding tRNA nucleotidyltransferase.